The sequence spans 736 residues: MDAKTDDKGAGKCPFSGGSHGHRNRDWWPDQLDISVLHNNSKKSDPMGAAFNYAEEFKKLDLEAVKKDLHALMTDSQEWWPADFGHYGGLFVRMAWHSAGTYRITDGRGGAGAGQQRFAPLNSWPDNANLDKARRLLWPIKQKYGSKISWADLMVLTGNVALESMGFKTFGFAGGRADVWEPEELYWGPEGTWLGDERYSGERQLAEPLGAVQMGLIYVNPEGPNGNPDPVAAAKDIRETFARMAMDDEETVALIAGGHTFGKTHGAGDPSLIGPAPEGGLLEEQGLGWTSKYGTGFGADAITGGPEVIWTQTPTQWSNHFFENLFGFEWELDKSPAGAKQWKAKGAEATVPDPFDPAKKRVPTMLTTDLSLRFDPIYEKISRRFLENPDQFADAFARAWFKLTHRDMGPRERYLGPEVPKEELIWQDPIPAVNHELVGEADIEALKAKILASGLSVAQLVSTAWASASTFRGSDKRGGANGARIRLAPQKDWEVNQPAELAQVLGKLEAIQGEFNGAQKDGKKVSLADLIVLGGAAAIEKAAKDAGTAVKVPFTPGRMDASAEQTDVESFKVLEPRADGFRNYINTKRHQFMHPEEALVDKAQLLTLTGPELTVLVGGLRVLGANYAHSTHGVLTERPEKLTNDFFVNLLDMGTKWTKANGEVEIYEGRDRKNGELKWTGTRVDLVFGSHSQLRAFAEVYACSDAQEKFVSDFVAAWSKVMNADRFDIVAKKQAA.

Residues 1-10 (MDAKTDDKGA) show a composition bias toward basic and acidic residues. Residues 1–26 (MDAKTDDKGAGKCPFSGGSHGHRNRD) form a disordered region. The segment at residues 96–218 (WHSAGTYRIT…LGAVQMGLIY (123 aa)) is a cross-link (tryptophyl-tyrosyl-methioninium (Trp-Tyr) (with M-244)). His-97 (proton acceptor) is an active-site residue. Residues 218-244 (YVNPEGPNGNPDPVAAAKDIRETFARM) constitute a cross-link (tryptophyl-tyrosyl-methioninium (Tyr-Met) (with W-96)). His-259 serves as a coordination point for heme b.

It belongs to the peroxidase family. Peroxidase/catalase subfamily. In terms of assembly, homodimer or homotetramer. It depends on heme b as a cofactor. Post-translationally, formation of the three residue Trp-Tyr-Met cross-link is important for the catalase, but not the peroxidase activity of the enzyme.

The enzyme catalyses H2O2 + AH2 = A + 2 H2O. It carries out the reaction 2 H2O2 = O2 + 2 H2O. Functionally, bifunctional enzyme with both catalase and broad-spectrum peroxidase activity. The polypeptide is Catalase-peroxidase (Rhodopseudomonas palustris (strain ATCC BAA-98 / CGA009)).